A 264-amino-acid chain; its full sequence is Protein hob3 (264 aa).

The BAR domain maps to 17–237; that stretch reads VMMKTGHVER…FDNSVREDYS (221 aa). 2 coiled-coil regions span residues 25–65 and 165–187; these read ERTV…AMTA and RTEKEAAMAKEVYETLNNQLVSE.

The protein resides in the cytoplasm. It localises to the cytoskeleton. In terms of biological role, involved in cytokinesis and septation where it has a role in the localization of F-actin. In Schizosaccharomyces pombe (strain 972 / ATCC 24843) (Fission yeast), this protein is Protein hob3 (hob3).